A 141-amino-acid polypeptide reads, in one-letter code: uncharacterized protein (141 aa).

Residues 13 to 35 traverse the membrane as a helical segment; it reads PVIGVILMVAITVILAAVIASFV.

Its subcellular location is the membrane. This is an uncharacterized protein from Archaeoglobus fulgidus (strain ATCC 49558 / DSM 4304 / JCM 9628 / NBRC 100126 / VC-16).